Consider the following 349-residue polypeptide: GTPase Obg (349 aa).

One can recognise an Obg domain in the interval 1–159 (MKFLDEAKVY…RWIWLRLKLI (159 aa)). The OBG-type G domain occupies 160–327 (ADAGLVGLPN…ALRALVEVIG (168 aa)). Residues 166-173 (GLPNAGKS), 191-195 (FTTLH), 212-215 (DIPG), 279-282 (NKID), and 308-310 (SGV) contribute to the GTP site. Residues serine 173 and threonine 193 each contribute to the Mg(2+) site.

The protein belongs to the TRAFAC class OBG-HflX-like GTPase superfamily. OBG GTPase family. In terms of assembly, monomer. Requires Mg(2+) as cofactor.

The protein resides in the cytoplasm. In terms of biological role, an essential GTPase which binds GTP, GDP and possibly (p)ppGpp with moderate affinity, with high nucleotide exchange rates and a fairly low GTP hydrolysis rate. Plays a role in control of the cell cycle, stress response, ribosome biogenesis and in those bacteria that undergo differentiation, in morphogenesis control. The chain is GTPase Obg from Rhodopseudomonas palustris (strain BisB18).